A 32-amino-acid chain; its full sequence is Beta-amanitin proprotein (32 aa).

A propeptide spanning residues Met-1–Pro-10 is cleaved from the precursor. The segment at residues Ile-11 to Pro-18 is a cross-link (cyclopeptide (Ile-Pro)). Positions Trp-12–Cys-16 form a cross-link, 2'-cysteinyl-6'-hydroxytryptophan sulfoxide (Trp-Cys). The propeptide occupies Cys-19 to Glu-32.

Belongs to the MSDIN fungal toxin family. Post-translationally, processed by the macrocyclase-peptidase enzyme POPB to yield a toxic cyclic decapeptide. POPB first removes 10 residues from the N-terminus. Conformational trapping of the remaining peptide forces the enzyme to release this intermediate rather than proceed to macrocyclization. The enzyme rebinds the remaining peptide in a different conformation and catalyzes macrocyclization of the N-terminal 8 residues.

Functionally, toxin belonging to the bicyclic octapeptides amatoxins that acts by binding non-competitively to RNA polymerase II and greatly slowing the elongation of transcripts from target promoters. The sequence is that of Beta-amanitin proprotein from Amanita phalloides (Death cap).